A 155-amino-acid polypeptide reads, in one-letter code: Small ribosomal subunit protein uS7cz/uS7cy (155 aa).

The protein belongs to the universal ribosomal protein uS7 family. Part of the 30S ribosomal subunit.

Its subcellular location is the plastid. It is found in the chloroplast. Its function is as follows. One of the primary rRNA binding proteins, it binds directly to 16S rRNA where it nucleates assembly of the head domain of the 30S subunit. This is Small ribosomal subunit protein uS7cz/uS7cy (rps7-A) from Vitis vinifera (Grape).